The sequence spans 315 residues: High mobility group protein hmg-12 (315 aa).

The disordered stretch occupies residues 57–315; the sequence is VKNETDSEAV…AIDAFFDGSD (259 aa). The span at 77-86 shows a compositional bias: polar residues; that stretch reads ANDSPANTND. A DNA-binding region (a.T hook 1) is located at residues 118-128; that stretch reads PVKKGRGRPIK. 2 stretches are compositionally biased toward low complexity: residues 147-160 and 196-205; these read AQTP…IDTA and AADTDAIDTA.

Belongs to the HMGA family.

The protein resides in the nucleus. Functionally, transcriptional regulator. Binds to specific sequence motifs in regulatory elements. May recruit transcription factors, or may induce structural changes in chromatin, to thereby modulate embryonic expression of ATP-dependent chaperone cdc-48.1. The polypeptide is High mobility group protein hmg-12 (Caenorhabditis elegans).